Here is a 130-residue protein sequence, read N- to C-terminus: Small ribosomal subunit protein uS8 (130 aa).

It belongs to the universal ribosomal protein uS8 family. As to quaternary structure, part of the 30S ribosomal subunit.

One of the primary rRNA binding proteins, it binds directly to 16S rRNA central domain where it helps coordinate assembly of the platform of the 30S subunit. This Thermococcus sibiricus (strain DSM 12597 / MM 739) protein is Small ribosomal subunit protein uS8.